A 163-amino-acid polypeptide reads, in one-letter code: Thiol peroxidase (163 aa).

The 147-residue stretch at 16 to 162 (LQVGDTAHDF…YDAAIAAVKN (147 aa)) folds into the Thioredoxin domain. The Cysteine sulfenic acid (-SOH) intermediate role is filled by Cys58. Cys58 and Cys92 form a disulfide bridge.

The protein belongs to the peroxiredoxin family. Tpx subfamily. Homodimer.

It catalyses the reaction a hydroperoxide + [thioredoxin]-dithiol = an alcohol + [thioredoxin]-disulfide + H2O. Functionally, thiol-specific peroxidase that catalyzes the reduction of hydrogen peroxide and organic hydroperoxides to water and alcohols, respectively. Plays a role in cell protection against oxidative stress by detoxifying peroxides. The sequence is that of Thiol peroxidase from Streptococcus gordonii.